We begin with the raw amino-acid sequence, 118 residues long: Small ribosomal subunit protein uS13 (118 aa).

Residues 94-118 form a disordered region; sequence GLPVRGQRTKTNARTRKGPRKPIKK.

It belongs to the universal ribosomal protein uS13 family. Part of the 30S ribosomal subunit. Forms a loose heterodimer with protein S19. Forms two bridges to the 50S subunit in the 70S ribosome.

Functionally, located at the top of the head of the 30S subunit, it contacts several helices of the 16S rRNA. In the 70S ribosome it contacts the 23S rRNA (bridge B1a) and protein L5 of the 50S subunit (bridge B1b), connecting the 2 subunits; these bridges are implicated in subunit movement. Contacts the tRNAs in the A and P-sites. The chain is Small ribosomal subunit protein uS13 from Haemophilus ducreyi (strain 35000HP / ATCC 700724).